The following is a 141-amino-acid chain: Nucleoside diphosphate kinase (141 aa).

Residues lysine 11, phenylalanine 59, arginine 87, threonine 93, arginine 104, and asparagine 114 each contribute to the ATP site. Histidine 117 (pros-phosphohistidine intermediate) is an active-site residue.

This sequence belongs to the NDK family. In terms of assembly, homotetramer. Mg(2+) serves as cofactor.

Its subcellular location is the cytoplasm. The enzyme catalyses a 2'-deoxyribonucleoside 5'-diphosphate + ATP = a 2'-deoxyribonucleoside 5'-triphosphate + ADP. It catalyses the reaction a ribonucleoside 5'-diphosphate + ATP = a ribonucleoside 5'-triphosphate + ADP. Its function is as follows. Major role in the synthesis of nucleoside triphosphates other than ATP. The ATP gamma phosphate is transferred to the NDP beta phosphate via a ping-pong mechanism, using a phosphorylated active-site intermediate. This Chromobacterium violaceum (strain ATCC 12472 / DSM 30191 / JCM 1249 / CCUG 213 / NBRC 12614 / NCIMB 9131 / NCTC 9757 / MK) protein is Nucleoside diphosphate kinase.